Reading from the N-terminus, the 127-residue chain is Anti-adapter protein IraD (127 aa).

It belongs to the GpW/Gp25 family. IraD subfamily. Interacts with RssB.

Its subcellular location is the cytoplasm. Inhibits RpoS proteolysis by regulating RssB activity, thereby increasing the stability of the sigma stress factor RpoS during oxidative stress. Its effect on RpoS stability is due to its interaction with RssB, which probably blocks the interaction of RssB with RpoS, and the consequent delivery of the RssB-RpoS complex to the ClpXP protein degradation pathway. The protein is Anti-adapter protein IraD of Escherichia coli O6:H1 (strain CFT073 / ATCC 700928 / UPEC).